An 883-amino-acid chain; its full sequence is Alanine--tRNA ligase (883 aa).

Residues histidine 562, histidine 566, cysteine 664, and histidine 668 each contribute to the Zn(2+) site.

The protein belongs to the class-II aminoacyl-tRNA synthetase family. Homotetramer. Zn(2+) serves as cofactor.

The protein localises to the cytoplasm. It carries out the reaction tRNA(Ala) + L-alanine + ATP = L-alanyl-tRNA(Ala) + AMP + diphosphate. Functionally, catalyzes the attachment of alanine to tRNA(Ala) in a two-step reaction: alanine is first activated by ATP to form Ala-AMP and then transferred to the acceptor end of tRNA(Ala). Also edits incorrectly charged Ser-tRNA(Ala) and Gly-tRNA(Ala) via its editing domain. This is Alanine--tRNA ligase from Buchnera aphidicola subsp. Schizaphis graminum (strain Sg).